Consider the following 1164-residue polypeptide: DNA-directed RNA polymerase 132 kDa polypeptide (1164 aa).

This sequence belongs to the RNA polymerase beta chain family. As to quaternary structure, the DNA-dependent RNA polymerase used for intermediate and late genes expression consists of eight subunits (147) kDa, (133) kDa, (35) kDa, (30) kDa, (22) kDa, (19) kDa, (18) kDa and (7) kDa totalling more than 500 kDa in mass. The same holoenzyme, with the addition of the transcription-specificity factor RAP94, is used for early gene expression.

The protein resides in the virion. It catalyses the reaction RNA(n) + a ribonucleoside 5'-triphosphate = RNA(n+1) + diphosphate. Its function is as follows. Part of the DNA-dependent RNA polymerase which catalyzes the transcription of viral DNA into RNA using the four ribonucleoside triphosphates as substrates. Responsible for the transcription of early, intermediate and late genes. DNA-dependent RNA polymerase associates with the early transcription factor (ETF), itself composed of D6 and A7, thereby allowing the early genes transcription. Late transcription, and probably also intermediate transcription, require newly synthesized RNA polymerase. This is DNA-directed RNA polymerase 132 kDa polypeptide (RPO132) from Mus musculus (Mouse).